Consider the following 361-residue polypeptide: Phospho-N-acetylmuramoyl-pentapeptide-transferase (361 aa).

Transmembrane regions (helical) follow at residues 28 to 48 (LSMF…IKFF), 70 to 90 (IGTP…GILL), 94 to 114 (LSNY…LLGA), 129 to 149 (VSFK…IYGL), 169 to 189 (LIIN…VGSS), 205 to 225 (PVIL…NIVF), 237 to 257 (MGEV…FLWF), 264 to 284 (IFMG…IGII), 289 to 309 (IVLA…IIQV), and 338 to 358 (TVVI…LATL).

This sequence belongs to the glycosyltransferase 4 family. MraY subfamily. It depends on Mg(2+) as a cofactor.

It is found in the cell inner membrane. The catalysed reaction is UDP-N-acetyl-alpha-D-muramoyl-L-alanyl-gamma-D-glutamyl-meso-2,6-diaminopimeloyl-D-alanyl-D-alanine + di-trans,octa-cis-undecaprenyl phosphate = di-trans,octa-cis-undecaprenyl diphospho-N-acetyl-alpha-D-muramoyl-L-alanyl-D-glutamyl-meso-2,6-diaminopimeloyl-D-alanyl-D-alanine + UMP. The protein operates within cell wall biogenesis; peptidoglycan biosynthesis. Functionally, catalyzes the initial step of the lipid cycle reactions in the biosynthesis of the cell wall peptidoglycan: transfers peptidoglycan precursor phospho-MurNAc-pentapeptide from UDP-MurNAc-pentapeptide onto the lipid carrier undecaprenyl phosphate, yielding undecaprenyl-pyrophosphoryl-MurNAc-pentapeptide, known as lipid I. The sequence is that of Phospho-N-acetylmuramoyl-pentapeptide-transferase from Pelagibacter ubique (strain HTCC1062).